The chain runs to 602 residues: Elongation factor 4 (602 aa).

In terms of domain architecture, tr-type G spans Glu7–Lys188. GTP-binding positions include Asp19 to Thr24 and Asn135 to Asp138.

It belongs to the TRAFAC class translation factor GTPase superfamily. Classic translation factor GTPase family. LepA subfamily.

Its subcellular location is the cell inner membrane. It carries out the reaction GTP + H2O = GDP + phosphate + H(+). In terms of biological role, required for accurate and efficient protein synthesis under certain stress conditions. May act as a fidelity factor of the translation reaction, by catalyzing a one-codon backward translocation of tRNAs on improperly translocated ribosomes. Back-translocation proceeds from a post-translocation (POST) complex to a pre-translocation (PRE) complex, thus giving elongation factor G a second chance to translocate the tRNAs correctly. Binds to ribosomes in a GTP-dependent manner. This Chlamydia muridarum (strain MoPn / Nigg) protein is Elongation factor 4.